The primary structure comprises 222 residues: Small ribosomal subunit protein eS1 (222 aa).

The protein belongs to the eukaryotic ribosomal protein eS1 family.

The sequence is that of Small ribosomal subunit protein eS1 from Pyrobaculum islandicum (strain DSM 4184 / JCM 9189 / GEO3).